Consider the following 119-residue polypeptide: MTRVPRGYIARRRRTKMRSFASNFRGAHLRLNRMITQQVRRAFVSSHRDRGRQKRDFRRLWITRINAATRVYNVFNSYSKLIHNLSKKELILNRKMLAQVAVSNPNNLYTISNKIRTIN.

This sequence belongs to the bacterial ribosomal protein bL20 family.

The protein localises to the plastid. It is found in the chloroplast. In terms of biological role, binds directly to 23S ribosomal RNA and is necessary for the in vitro assembly process of the 50S ribosomal subunit. It is not involved in the protein synthesizing functions of that subunit. This chain is Large ribosomal subunit protein bL20c, found in Saccharum officinarum (Sugarcane).